A 557-amino-acid chain; its full sequence is MSSSESSSASGGGPPDAEPSQTEQQTMPQLDTLISHLVAAKRSLSSINHVWRANEIVTTARAALEESVVVSARTGFLRRGLNNQLRLLYSVRTEVEEISLRGRSEFAAVLKDLDAADARLRRTLELLRETIVHGGFRPEGEQPRSLHDFVDERGVEELHAALKNSIDRTNGAQAQLDSSNHAFDDELLSIKEALGNYRAVAKLASSRSSSSPSSSSASNSSLPSMSSMPSMLHSLEMHAQEMANLLESLVRHFDLCVTAVKHTEGGGAAAKSITGDMHVGVNASGRIGPNIEEGINANLNAPLDPLSDSEYREMVHVLIKDATEAEDVVMEIHDRIGEMESSLENVLAQRDALRSIYNATIDVFQHLSSLASTRLPGYIAQAHDFTRVWHEENDRIAGGLDDLAHLNSFYDGFLDAYDGLIIEVARRRHVRQRVEKVLRDAKHKLDQLYEEDVNAREAFRVEKGDYLPSDIWPEVGREPMRIEFRRILGGKVKGAVSEQANDEEPTAGEREQRGGGQENHLSAVGDNTEVDEVIPELPRDLVEQVFARIQTRVKSTT.

Disordered regions lie at residues 1-25 (MSSS…TEQQ) and 204-227 (ASSR…SMSS). The segment covering 205–227 (SSRSSSSPSSSSASNSSLPSMSS) has biased composition (low complexity). Coiled-coil stretches lie at residues 334–355 (DRIG…ALRS) and 428–458 (RHVR…AREA). The interval 495-532 (AVSEQANDEEPTAGEREQRGGGQENHLSAVGDNTEVDE) is disordered.

It belongs to the ATG17 family.

It localises to the cytoplasm. The protein resides in the preautophagosomal structure membrane. Functionally, autophagy-specific protein that functions in response to autophagy-inducing signals as a scaffold to recruit other ATG proteins to organize pre-autophagosomal structure (PAS) formation. Modulates the timing and magnitude of the autophagy response, such as the size of the sequestering vesicles. Plays particularly a role in pexophagy and nucleophagy. In Aspergillus clavatus (strain ATCC 1007 / CBS 513.65 / DSM 816 / NCTC 3887 / NRRL 1 / QM 1276 / 107), this protein is Autophagy-related protein 17 (atg17).